The sequence spans 82 residues: Large ribosomal subunit protein uL23 (82 aa).

This sequence belongs to the universal ribosomal protein uL23 family. Part of the 50S ribosomal subunit. Contacts protein L29.

Binds to 23S rRNA. One of the proteins that surrounds the polypeptide exit tunnel on the outside of the ribosome. The protein is Large ribosomal subunit protein uL23 of Sulfurisphaera tokodaii (strain DSM 16993 / JCM 10545 / NBRC 100140 / 7) (Sulfolobus tokodaii).